Reading from the N-terminus, the 525-residue chain is GMP synthase [glutamine-hydrolyzing] (525 aa).

The Glutamine amidotransferase type-1 domain maps to 9–207; that stretch reads RILILDFGSQ…VLEISGCEAL (199 aa). Cys86 functions as the Nucleophile in the catalytic mechanism. Residues His181 and Glu183 contribute to the active site. The GMPS ATP-PPase domain occupies 208 to 400; sequence WTPANIVEDA…LGLPYDMVYR (193 aa). 235 to 241 is a binding site for ATP; sequence SGGVDSS.

Homodimer.

The catalysed reaction is XMP + L-glutamine + ATP + H2O = GMP + L-glutamate + AMP + diphosphate + 2 H(+). It participates in purine metabolism; GMP biosynthesis; GMP from XMP (L-Gln route): step 1/1. Its function is as follows. Catalyzes the synthesis of GMP from XMP. The protein is GMP synthase [glutamine-hydrolyzing] of Ectopseudomonas mendocina (strain ymp) (Pseudomonas mendocina).